The sequence spans 132 residues: Small ribosomal subunit protein uS8 (132 aa).

The protein belongs to the universal ribosomal protein uS8 family. In terms of assembly, part of the 30S ribosomal subunit. Contacts proteins S5 and S12.

In terms of biological role, one of the primary rRNA binding proteins, it binds directly to 16S rRNA central domain where it helps coordinate assembly of the platform of the 30S subunit. This chain is Small ribosomal subunit protein uS8, found in Corynebacterium efficiens (strain DSM 44549 / YS-314 / AJ 12310 / JCM 11189 / NBRC 100395).